A 363-amino-acid chain; its full sequence is MAKDEKKAALDAALKKIEKNFGKGAVMRMGEKADTQISTVPTGSLALDAAIGVGGYPRGRIIEVYGPESSGKTTVALHAVAEVQKRGGTAAYIDAENAMDPAYAEALGVDIDSLILSQPNTGEEGLQIADTLISSGAIDIVVVDSVAALVPRAEIEGEMGDAHVGLQARLMSQALRKLSGTISKTKTIAIFINQIREKVGVMFGNPETTPGGRALKFYSTVRLEVRRAEQIKQSGDVLGNRVKIKVVKNKVAPPFKVAEVDIMYGKGISQSGELLDMAADKDIIDKAGSWYSYKSDRIGQGRENAKKYLEEHPDIYQKVQEQVRQAYGIDEKSIADRENPEKIKEKREETSEENKTDNSEKTK.

An ATP-binding site is contributed by Gly-66–Thr-73. The segment at Tyr-327–Lys-363 is disordered. The segment covering Ile-329–Lys-363 has biased composition (basic and acidic residues).

It belongs to the RecA family.

The protein localises to the cytoplasm. In terms of biological role, can catalyze the hydrolysis of ATP in the presence of single-stranded DNA, the ATP-dependent uptake of single-stranded DNA by duplex DNA, and the ATP-dependent hybridization of homologous single-stranded DNAs. It interacts with LexA causing its activation and leading to its autocatalytic cleavage. The sequence is that of Protein RecA from Lactobacillus acidophilus (strain ATCC 700396 / NCK56 / N2 / NCFM).